Consider the following 208-residue polypeptide: MVPGSCSSFGLLVILSFQNVPDVGGFPNVPLFSLFTNAVNRAQHLHMLAADIYKDYERTYITDDVRRSSKNSQVVSCYSENIPAPTDKDNTHLKSDMDLLRFSLTLIQSWLNPVQALHRLFRNSDVYERLKYLEEGIQSLIRELEDGNLRSYSFMRTPYERLDINMRTDDGLLKVYGLLSCFKKDMHKVETYMKVIKCRHFAESKCVI.

The signal sequence occupies residues 1–25; sequence MVPGSCSSFGLLVILSFQNVPDVGG. Position 44 (H44) interacts with Zn(2+). C77 and C181 are oxidised to a cystine. Residue E190 coordinates Zn(2+). Residues C198 and C206 are joined by a disulfide bond.

This sequence belongs to the somatotropin/prolactin family.

Its subcellular location is the secreted. Functionally, growth hormone plays an important role in growth control. This is Somatotropin-B (gh-b) from Xenopus laevis (African clawed frog).